Consider the following 454-residue polypeptide: Bifunctional protein GlmU (454 aa).

Residues 1-232 are pyrophosphorylase; it reads MTDRTCLSIV…VDNVIGINNR (232 aa). Residues 11 to 14, K25, Q78, and 83 to 84 each bind UDP-N-acetyl-alpha-D-glucosamine; these read LAAG and GT. D108 provides a ligand contact to Mg(2+). UDP-N-acetyl-alpha-D-glucosamine-binding residues include G144, E158, N173, and N230. N230 contributes to the Mg(2+) binding site. A linker region spans residues 233–253; the sequence is VELAEAEAIWQQRKRREMMLA. Residues 254–454 are N-acetyltransferase; sequence GVTLIAPETV…AIKAAKTATK (201 aa). Residues R319 and K337 each contribute to the UDP-N-acetyl-alpha-D-glucosamine site. The active-site Proton acceptor is H349. 2 residues coordinate UDP-N-acetyl-alpha-D-glucosamine: Y352 and N363. Acetyl-CoA contacts are provided by residues A366, 372–373, S391, S409, and R426; that span reads NY.

This sequence in the N-terminal section; belongs to the N-acetylglucosamine-1-phosphate uridyltransferase family. The protein in the C-terminal section; belongs to the transferase hexapeptide repeat family. As to quaternary structure, homotrimer. Mg(2+) serves as cofactor.

The protein localises to the cytoplasm. It carries out the reaction alpha-D-glucosamine 1-phosphate + acetyl-CoA = N-acetyl-alpha-D-glucosamine 1-phosphate + CoA + H(+). The catalysed reaction is N-acetyl-alpha-D-glucosamine 1-phosphate + UTP + H(+) = UDP-N-acetyl-alpha-D-glucosamine + diphosphate. Its pathway is nucleotide-sugar biosynthesis; UDP-N-acetyl-alpha-D-glucosamine biosynthesis; N-acetyl-alpha-D-glucosamine 1-phosphate from alpha-D-glucosamine 6-phosphate (route II): step 2/2. It participates in nucleotide-sugar biosynthesis; UDP-N-acetyl-alpha-D-glucosamine biosynthesis; UDP-N-acetyl-alpha-D-glucosamine from N-acetyl-alpha-D-glucosamine 1-phosphate: step 1/1. The protein operates within bacterial outer membrane biogenesis; LPS lipid A biosynthesis. In terms of biological role, catalyzes the last two sequential reactions in the de novo biosynthetic pathway for UDP-N-acetylglucosamine (UDP-GlcNAc). The C-terminal domain catalyzes the transfer of acetyl group from acetyl coenzyme A to glucosamine-1-phosphate (GlcN-1-P) to produce N-acetylglucosamine-1-phosphate (GlcNAc-1-P), which is converted into UDP-GlcNAc by the transfer of uridine 5-monophosphate (from uridine 5-triphosphate), a reaction catalyzed by the N-terminal domain. The sequence is that of Bifunctional protein GlmU from Brucella anthropi (strain ATCC 49188 / DSM 6882 / CCUG 24695 / JCM 21032 / LMG 3331 / NBRC 15819 / NCTC 12168 / Alc 37) (Ochrobactrum anthropi).